The chain runs to 87 residues: Retinal rod rhodopsin-sensitive cGMP 3',5'-cyclic phosphodiesterase subunit gamma (87 aa).

An N-acetylmethionine modification is found at M1. A disordered region spans residues 16–54 (VVGGPVTPRKGPPKFKQRQTRQFKSKPPKKGVQGFGDDI). Residues 26–44 (GPPKFKQRQTRQFKSKPPK) are compositionally biased toward basic residues.

The protein belongs to the rod/cone cGMP-PDE gamma subunit family. In terms of assembly, oligomer composed of two catalytic chains (alpha and beta), an inhibitory chain (gamma) and the delta chain.

It catalyses the reaction 3',5'-cyclic GMP + H2O = GMP + H(+). Its function is as follows. Participates in processes of transmission and amplification of the visual signal. cGMP-PDEs are the effector molecules in G-protein-mediated phototransduction in vertebrate rods and cones. The sequence is that of Retinal rod rhodopsin-sensitive cGMP 3',5'-cyclic phosphodiesterase subunit gamma (PDE6G) from Cavia porcellus (Guinea pig).